The following is a 440-amino-acid chain: UPF0489 protein C5orf22 homolog (440 aa).

The segment at 187–207 is disordered; sequence VEGSSSGIQSSTSESSEDGLM. The segment covering 188–200 has biased composition (low complexity); the sequence is EGSSSGIQSSTSE.

This sequence belongs to the UPF0489 family.

The protein is UPF0489 protein C5orf22 homolog of Xenopus tropicalis (Western clawed frog).